A 358-amino-acid chain; its full sequence is Alanine racemase (358 aa).

The active-site Proton acceptor; specific for D-alanine is the Lys-35. Lys-35 carries the post-translational modification N6-(pyridoxal phosphate)lysine. Position 130 (Arg-130) interacts with substrate. The active-site Proton acceptor; specific for L-alanine is the Tyr-255. Met-303 contacts substrate.

This sequence belongs to the alanine racemase family. The cofactor is pyridoxal 5'-phosphate.

The enzyme catalyses L-alanine = D-alanine. Its pathway is amino-acid biosynthesis; D-alanine biosynthesis; D-alanine from L-alanine: step 1/1. Catalyzes the interconversion of L-alanine and D-alanine. May also act on other amino acids. The sequence is that of Alanine racemase (alr) from Shewanella sp. (strain ANA-3).